The primary structure comprises 386 residues: MQTTTITMGDVQYPYRLGTGCVDGIVTRLGELEASHYLVLCDATVAELYGHDLAARLRRSAGPASVLTHPAGEEHKGLGTLDTLADAALHAGVDRRGVVVALGGGVTGNIAGLLAALLFRGIRLVHVPTTVVAMLDSVLSLKQAVNAQVGKNLVGTFYPPVEVLADTAMLGTLPVREIRSGLCEVVKNALAIRPSMIDFLAAELRPDGRYADDVLRWMIDESVAAKAQVTEHDKYERREGLVLEYGHTVGHALEHASHGAVSHGAGVGVGMVAAAEVARRLGHVDADLVELHRELVGKVGVATTLPADVPTEEITYRLGFDNKRGYQPLPADHYAMVLLADVGQPLYQDGLPLTPAPRALVDEVVRELADAPSRIGASVGSAGGAS.

NAD(+) contacts are provided by residues Asp42, 73-76, 105-109, 129-130, 140-142, and 151-152; these read EEHK, GVTGN, TT, SLK, and KN. The active site involves Lys142. Glu184 contacts Co(2+). Glu244 is an active-site residue. The Co(2+) site is built by His247 and His263.

It belongs to the sugar phosphate cyclases superfamily. DOI synthase family. Requires NAD(+) as cofactor. The cofactor is Co(2+).

It carries out the reaction D-glucose 6-phosphate = 2-deoxy-L-scyllo-inosose + phosphate. It participates in metabolic intermediate biosynthesis; 2-deoxystreptamine biosynthesis; 2-deoxystreptamine from D-glucose 6-phosphate: step 1/4. Its pathway is antibiotic biosynthesis; tobramycin biosynthesis. Catalyzes the intramolecular carbocycle formation from D-glucose-6-phosphate to 2-deoxy-scyllo-inosose (DOI). In Streptoalloteichus tenebrarius (strain ATCC 17920 / DSM 40477 / JCM 4838 / CBS 697.72 / NBRC 16177 / NCIMB 11028 / NRRL B-12390 / A12253. 1 / ISP 5477) (Streptomyces tenebrarius), this protein is 2-deoxy-scyllo-inosose synthase (tbmA).